A 385-amino-acid chain; its full sequence is tRNA-specific 2-thiouridylase MnmA (385 aa).

Residues 30-37 (GMSGGVDS) and Met-56 contribute to the ATP site. An interaction with target base in tRNA region spans residues 118 to 120 (NPD). Cys-123 (nucleophile) is an active-site residue. Cysteines 123 and 220 form a disulfide. Position 148 (Gly-148) interacts with ATP. Positions 170 to 172 (KDQ) are interaction with tRNA. Cys-220 serves as the catalytic Cysteine persulfide intermediate. The interval 332 to 333 (RY) is interaction with tRNA.

This sequence belongs to the MnmA/TRMU family.

It is found in the cytoplasm. The enzyme catalyses S-sulfanyl-L-cysteinyl-[protein] + uridine(34) in tRNA + AH2 + ATP = 2-thiouridine(34) in tRNA + L-cysteinyl-[protein] + A + AMP + diphosphate + H(+). Functionally, catalyzes the 2-thiolation of uridine at the wobble position (U34) of tRNA, leading to the formation of s(2)U34. The chain is tRNA-specific 2-thiouridylase MnmA from Haemophilus influenzae (strain PittGG).